We begin with the raw amino-acid sequence, 138 residues long: Small ribosomal subunit protein uS11c (138 aa).

Residues 1-23 (MAKPIPRIGSRRNGRIGSRKSAR) form a disordered region. Residues 9–23 (GSRRNGRIGSRKSAR) are compositionally biased toward basic residues.

The protein belongs to the universal ribosomal protein uS11 family. Part of the 30S ribosomal subunit.

Its subcellular location is the plastid. The protein resides in the chloroplast. This Vitis vinifera (Grape) protein is Small ribosomal subunit protein uS11c.